We begin with the raw amino-acid sequence, 394 residues long: Carbamoyltransferase HypF homolog (394 aa).

The protein belongs to the carbamoyltransferase HypF family.

This is Carbamoyltransferase HypF homolog (hypF1) from Cupriavidus necator (strain ATCC 17699 / DSM 428 / KCTC 22496 / NCIMB 10442 / H16 / Stanier 337) (Ralstonia eutropha).